The chain runs to 251 residues: Malonyl-[acyl-carrier protein] O-methyltransferase (251 aa).

The protein belongs to the methyltransferase superfamily.

It carries out the reaction malonyl-[ACP] + S-adenosyl-L-methionine = malonyl-[ACP] methyl ester + S-adenosyl-L-homocysteine. The protein operates within cofactor biosynthesis; biotin biosynthesis. Functionally, converts the free carboxyl group of a malonyl-thioester to its methyl ester by transfer of a methyl group from S-adenosyl-L-methionine (SAM). It allows to synthesize pimeloyl-ACP via the fatty acid synthetic pathway. In Enterobacter lignolyticus (strain SCF1), this protein is Malonyl-[acyl-carrier protein] O-methyltransferase.